The sequence spans 335 residues: NADH-quinone oxidoreductase subunit H (335 aa).

The next 8 helical transmembrane spans lie at 11–31 (VILT…AGAL), 81–101 (VIFT…FAII), 114–134 (IGLL…LFAG), 154–174 (VSYE…VGSF), 187–207 (LWFI…GVAV), 238–258 (FFVG…TLFF), 270–290 (QLSF…FILL), and 307–327 (WKFC…VVLW).

Belongs to the complex I subunit 1 family. In terms of assembly, NDH-1 is composed of 13 different subunits. Subunits NuoA, H, J, K, L, M, N constitute the membrane sector of the complex.

The protein localises to the cell inner membrane. It catalyses the reaction a quinone + NADH + 5 H(+)(in) = a quinol + NAD(+) + 4 H(+)(out). NDH-1 shuttles electrons from NADH, via FMN and iron-sulfur (Fe-S) centers, to quinones in the respiratory chain. The immediate electron acceptor for the enzyme in this species is believed to be ubiquinone. Couples the redox reaction to proton translocation (for every two electrons transferred, four hydrogen ions are translocated across the cytoplasmic membrane), and thus conserves the redox energy in a proton gradient. This subunit may bind ubiquinone. This Pseudomonas fluorescens (strain ATCC BAA-477 / NRRL B-23932 / Pf-5) protein is NADH-quinone oxidoreductase subunit H.